The chain runs to 2259 residues: Golgin subfamily A member 4 (2259 aa).

The segment at 1 to 54 (MFKKLKQKISEEQQQLQQALAPAQASSSSSTPTRTRSRTSSFTDQLDDATPNRE) is disordered. Serine 10 carries the phosphoserine modification. Positions 12 to 41 (EQQQLQQALAPAQASSSSSTPTRTRSRTSS) are enriched in low complexity. Residue threonine 39 is modified to Phosphothreonine. Residues serine 41, serine 104, and serine 111 each carry the phosphoserine modification. The interval 165 to 235 (SLSREQLLQR…EELQMDQQAK (71 aa)) is interaction with MACF1. The stretch at 167–2182 (SREQLLQRLR…SYEKSVCAAA (2016 aa)) forms a coiled coil. 2 stretches are compositionally biased toward basic and acidic residues: residues 1932–1946 (LEDR…HVIE) and 1954–1977 (DGRH…LSKE). A disordered region spans residues 1932 to 1977 (LEDRPEENSKSHVIESKLGTPMDGRHSDLESKLAGSEREKQKLSKE). The region spanning 2199 to 2246 (LFGEPTEFEYLRKVLFEYMMGRETKTMAKVITTVLRFPDDQAQKILER) is the GRIP domain.

In terms of assembly, homodimer. Interacts with GTP-bound ARL1 and ARL3. Interacts with MACF1. Directly interacts with TBC1D23. Interacts with FAM91A1; this interaction may be mediated by TBC1D23. As to expression, expressed in the head of epididymal sperm but not in testicular sperm (at protein level).

Its subcellular location is the cytoplasm. The protein resides in the golgi apparatus membrane. The protein localises to the golgi apparatus. It localises to the trans-Golgi network membrane. Involved in vesicular trafficking at the Golgi apparatus level. May play a role in delivery of transport vesicles containing GPI-linked proteins from the trans-Golgi network through its interaction with MACF1. Involved in endosome-to-Golgi trafficking. The chain is Golgin subfamily A member 4 from Rattus norvegicus (Rat).